The chain runs to 483 residues: tRNA sulfurtransferase (483 aa).

The THUMP domain maps to 61 to 165 (PLVADALTLI…NDRLLLITER (105 aa)). Residues 183–184 (LI), lysine 265, glycine 287, and glutamine 296 each bind ATP. Cysteines 344 and 457 form a disulfide. Residues 405–483 (LGSGDVVLDI…GFQNVKVYRP (79 aa)) form the Rhodanese domain. The active-site Cysteine persulfide intermediate is cysteine 457.

It belongs to the ThiI family.

It is found in the cytoplasm. The catalysed reaction is [ThiI sulfur-carrier protein]-S-sulfanyl-L-cysteine + a uridine in tRNA + 2 reduced [2Fe-2S]-[ferredoxin] + ATP + H(+) = [ThiI sulfur-carrier protein]-L-cysteine + a 4-thiouridine in tRNA + 2 oxidized [2Fe-2S]-[ferredoxin] + AMP + diphosphate. It carries out the reaction [ThiS sulfur-carrier protein]-C-terminal Gly-Gly-AMP + S-sulfanyl-L-cysteinyl-[cysteine desulfurase] + AH2 = [ThiS sulfur-carrier protein]-C-terminal-Gly-aminoethanethioate + L-cysteinyl-[cysteine desulfurase] + A + AMP + 2 H(+). The protein operates within cofactor biosynthesis; thiamine diphosphate biosynthesis. Its function is as follows. Catalyzes the ATP-dependent transfer of a sulfur to tRNA to produce 4-thiouridine in position 8 of tRNAs, which functions as a near-UV photosensor. Also catalyzes the transfer of sulfur to the sulfur carrier protein ThiS, forming ThiS-thiocarboxylate. This is a step in the synthesis of thiazole, in the thiamine biosynthesis pathway. The sulfur is donated as persulfide by IscS. This Sodalis glossinidius (strain morsitans) protein is tRNA sulfurtransferase.